The primary structure comprises 373 residues: tRNA pseudouridine synthase Pus10 (373 aa).

Catalysis depends on D197, which acts as the Nucleophile. Substrate is bound by residues Y265 and Y336.

This sequence belongs to the pseudouridine synthase Pus10 family.

It carries out the reaction uridine(54) in tRNA = pseudouridine(54) in tRNA. It catalyses the reaction uridine(55) in tRNA = pseudouridine(55) in tRNA. Its function is as follows. Responsible for synthesis of pseudouridine from uracil-54 and uracil-55 in the psi GC loop of transfer RNAs. This Korarchaeum cryptofilum (strain OPF8) protein is tRNA pseudouridine synthase Pus10.